Consider the following 142-residue polypeptide: Small ribosomal subunit protein uS19 (142 aa).

Residue S2 is modified to N-acetylserine. Residues K24, K35, and K64 each participate in a glycyl lysine isopeptide (Lys-Gly) (interchain with G-Cter in ubiquitin) cross-link.

Belongs to the universal ribosomal protein uS19 family. Component of the small ribosomal subunit (SSU). Mature yeast ribosomes consist of a small (40S) and a large (60S) subunit. The 40S small subunit contains 1 molecule of ribosomal RNA (18S rRNA) and 33 different proteins (encoded by 57 genes). The large 60S subunit contains 3 rRNA molecules (25S, 5.8S and 5S rRNA) and 46 different proteins (encoded by 81 genes).

It is found in the cytoplasm. Functionally, component of the ribosome, a large ribonucleoprotein complex responsible for the synthesis of proteins in the cell. The small ribosomal subunit (SSU) binds messenger RNAs (mRNAs) and translates the encoded message by selecting cognate aminoacyl-transfer RNA (tRNA) molecules. The large subunit (LSU) contains the ribosomal catalytic site termed the peptidyl transferase center (PTC), which catalyzes the formation of peptide bonds, thereby polymerizing the amino acids delivered by tRNAs into a polypeptide chain. The nascent polypeptides leave the ribosome through a tunnel in the LSU and interact with protein factors that function in enzymatic processing, targeting, and the membrane insertion of nascent chains at the exit of the ribosomal tunnel. uS19 is involved in the nuclear export of the small ribosomal subunit precursor. Has a role in the late stage of the assembly of pre-40S particles within the nucleus and controls their export to the cytoplasm. The protein is Small ribosomal subunit protein uS19 of Saccharomyces cerevisiae (strain ATCC 204508 / S288c) (Baker's yeast).